A 143-amino-acid chain; its full sequence is Flagellar assembly factor FliW (143 aa).

It belongs to the FliW family. In terms of assembly, interacts with translational regulator CsrA and flagellin(s).

The protein localises to the cytoplasm. Acts as an anti-CsrA protein, binds CsrA and prevents it from repressing translation of its target genes, one of which is flagellin. Binds to flagellin and participates in the assembly of the flagellum. This is Flagellar assembly factor FliW from Clostridium novyi (strain NT).